The sequence spans 727 residues: NADH-ubiquinone oxidoreductase 75 kDa subunit, mitochondrial (727 aa).

A mitochondrion-targeting transit peptide spans 1-23 (MLRIPIKRALIGLSNSPKGYVRT). A 2Fe-2S ferredoxin-type domain is found at 30-108 (NLIEVFVDGQ…GWNILTNSEK (79 aa)). [2Fe-2S] cluster-binding residues include Cys-64, Cys-75, and Cys-78. Lys-84 carries the post-translational modification N6-acetyllysine. Position 92 (Cys-92) interacts with [2Fe-2S] cluster. One can recognise a 4Fe-4S His(Cys)3-ligated-type domain in the interval 108–147 (KSKKAREGVMEFLLANHPLDCPICDQGGECDLQDQSMMFG). [4Fe-4S] cluster-binding residues include His-124, Cys-128, Cys-131, Cys-137, Cys-176, Cys-179, Cys-182, and Cys-226. Positions 245–301 (TRKTESIDVMDAVGSNIVVSTRTGEVMRILPRMHEDINEEWISDKTRFAYDGLKRQR) constitute a 4Fe-4S Mo/W bis-MGD-type domain. Residue Ser-461 is modified to Phosphoserine. Residues Lys-467, Lys-499, and Lys-709 each carry the N6-acetyllysine modification.

It belongs to the complex I 75 kDa subunit family. Core subunit of respiratory chain NADH dehydrogenase (Complex I) which is composed of 45 different subunits. This is the largest subunit of complex I and it is a component of the iron-sulfur (IP) fragment of the enzyme. Complex I associates with ubiquinol-cytochrome reductase complex (Complex III) to form supercomplexes. In astrocytes, less complex I is assembled into supercomplexes as compared to neurons. Interacts with MDM2. Interacts with AKAP1. The cofactor is [2Fe-2S] cluster. [4Fe-4S] cluster is required as a cofactor. Post-translationally, acetylation of Lys-84 is observed in liver mitochondria from fasted mice but not from fed mice. As to expression, brain. More abundant in neurons than in astrocytes (at protein level).

Its subcellular location is the mitochondrion inner membrane. The enzyme catalyses a ubiquinone + NADH + 5 H(+)(in) = a ubiquinol + NAD(+) + 4 H(+)(out). Functionally, core subunit of the mitochondrial membrane respiratory chain NADH dehydrogenase (Complex I) which catalyzes electron transfer from NADH through the respiratory chain, using ubiquinone as an electron acceptor. Essential for catalysing the entry and efficient transfer of electrons within complex I. Plays a key role in the assembly and stability of complex I and participates in the association of complex I with ubiquinol-cytochrome reductase complex (Complex III) to form supercomplexes. The polypeptide is NADH-ubiquinone oxidoreductase 75 kDa subunit, mitochondrial (Ndufs1) (Mus musculus (Mouse)).